The sequence spans 425 residues: Serine--tRNA ligase (425 aa).

233 to 235 (TAE) is an L-serine binding site. Residue 264–266 (RRE) coordinates ATP. Glutamate 287 contributes to the L-serine binding site. 351–354 (EISS) provides a ligand contact to ATP. Residue serine 385 coordinates L-serine.

Belongs to the class-II aminoacyl-tRNA synthetase family. Type-1 seryl-tRNA synthetase subfamily. Homodimer. The tRNA molecule binds across the dimer.

It localises to the cytoplasm. It catalyses the reaction tRNA(Ser) + L-serine + ATP = L-seryl-tRNA(Ser) + AMP + diphosphate + H(+). The catalysed reaction is tRNA(Sec) + L-serine + ATP = L-seryl-tRNA(Sec) + AMP + diphosphate + H(+). It functions in the pathway aminoacyl-tRNA biosynthesis; selenocysteinyl-tRNA(Sec) biosynthesis; L-seryl-tRNA(Sec) from L-serine and tRNA(Sec): step 1/1. Functionally, catalyzes the attachment of serine to tRNA(Ser). Is also able to aminoacylate tRNA(Sec) with serine, to form the misacylated tRNA L-seryl-tRNA(Sec), which will be further converted into selenocysteinyl-tRNA(Sec). The polypeptide is Serine--tRNA ligase (Prochlorococcus marinus (strain SARG / CCMP1375 / SS120)).